The sequence spans 508 residues: UTP--glucose-1-phosphate uridylyltransferase (508 aa).

Position 2 is a blocked amino end (Ser) (S2). A Phosphoserine modification is found at S13. Residues 113 to 116, K127, Q190, and G222 contribute to the UTP site; that span reads LNGG. A substrate-binding site is contributed by 115-116; that stretch reads GG. A Mg(2+)-binding site is contributed by K127. Residues H223 and 251–253 contribute to the substrate site; that span reads NID. 2 residues coordinate UTP: D253 and K396. D253 lines the Mg(2+) pocket. The active site involves K396. T426 carries the phosphothreonine modification. The residue at position 434 (S434) is a Phosphoserine. N6-acetyllysine is present on K438. Phosphoserine is present on residues S448 and S461. An oligomerization region spans residues 457–508; sequence HLTVSGDVTFGKNVSLKGTVIIIANHGDRIDIPPGAVLENKIVSGNLRILDH. The tract at residues 502–503 is critical for end-to-end subunit interaction; sequence NL.

Belongs to the UDPGP type 1 family. Homooctamer.

It localises to the cytoplasm. The catalysed reaction is alpha-D-glucose 1-phosphate + UTP + H(+) = UDP-alpha-D-glucose + diphosphate. The protein operates within glycan biosynthesis; glycogen biosynthesis. In terms of biological role, UTP--glucose-1-phosphate uridylyltransferase catalyzing the conversion of glucose-1-phosphate into UDP-glucose, a crucial precursor for the production of glycogen. This is UTP--glucose-1-phosphate uridylyltransferase (UGP2) from Bos taurus (Bovine).